We begin with the raw amino-acid sequence, 371 residues long: Chaperone protein DnaJ (371 aa).

Residues 5-69 (DYYEVLGLSK…QKRAQYDQFG (65 aa)) enclose the J domain. A CR-type zinc finger spans residues 133–215 (GKELNVEIPV…CHGSGKVRKR (83 aa)). Residues Cys146, Cys149, Cys163, Cys166, Cys189, Cys192, Cys203, and Cys206 each coordinate Zn(2+). CXXCXGXG motif repeat units lie at residues 146 to 153 (CDTCKGSG), 163 to 170 (CKHCSGSG), 189 to 196 (CSHCSGTG), and 203 to 210 (CTTCHGSG).

It belongs to the DnaJ family. Homodimer. Zn(2+) serves as cofactor.

Its subcellular location is the cytoplasm. Participates actively in the response to hyperosmotic and heat shock by preventing the aggregation of stress-denatured proteins and by disaggregating proteins, also in an autonomous, DnaK-independent fashion. Unfolded proteins bind initially to DnaJ; upon interaction with the DnaJ-bound protein, DnaK hydrolyzes its bound ATP, resulting in the formation of a stable complex. GrpE releases ADP from DnaK; ATP binding to DnaK triggers the release of the substrate protein, thus completing the reaction cycle. Several rounds of ATP-dependent interactions between DnaJ, DnaK and GrpE are required for fully efficient folding. Also involved, together with DnaK and GrpE, in the DNA replication of plasmids through activation of initiation proteins. This Bacillus cereus (strain 03BB102) protein is Chaperone protein DnaJ.